We begin with the raw amino-acid sequence, 174 residues long: Peptide deformylase (174 aa).

Cys-96 and His-138 together coordinate Fe cation. Glu-139 is an active-site residue. Fe cation is bound at residue His-142.

This sequence belongs to the polypeptide deformylase family. Fe(2+) serves as cofactor.

It catalyses the reaction N-terminal N-formyl-L-methionyl-[peptide] + H2O = N-terminal L-methionyl-[peptide] + formate. Functionally, removes the formyl group from the N-terminal Met of newly synthesized proteins. Requires at least a dipeptide for an efficient rate of reaction. N-terminal L-methionine is a prerequisite for activity but the enzyme has broad specificity at other positions. The chain is Peptide deformylase from Helicobacter pylori (strain G27).